The following is a 457-amino-acid chain: Siroheme synthase (457 aa).

Residues 1-204 (MDHLPIFCQL…ADEKAVNATT (204 aa)) form a precorrin-2 dehydrogenase /sirohydrochlorin ferrochelatase region. Residues 22–23 (DV) and 43–44 (LT) contribute to the NAD(+) site. Ser128 is modified (phosphoserine). The tract at residues 216 to 457 (GEVVLVGAGP…RDKLNWFSNY (242 aa)) is uroporphyrinogen-III C-methyltransferase. S-adenosyl-L-methionine is bound at residue Pro225. The active-site Proton acceptor is Asp248. The Proton donor role is filled by Lys270. S-adenosyl-L-methionine contacts are provided by residues 301–303 (GGD), Ile306, 331–332 (TA), Met382, and Gly411.

This sequence in the N-terminal section; belongs to the precorrin-2 dehydrogenase / sirohydrochlorin ferrochelatase family. The protein in the C-terminal section; belongs to the precorrin methyltransferase family.

It catalyses the reaction uroporphyrinogen III + 2 S-adenosyl-L-methionine = precorrin-2 + 2 S-adenosyl-L-homocysteine + H(+). The enzyme catalyses precorrin-2 + NAD(+) = sirohydrochlorin + NADH + 2 H(+). The catalysed reaction is siroheme + 2 H(+) = sirohydrochlorin + Fe(2+). Its pathway is cofactor biosynthesis; adenosylcobalamin biosynthesis; precorrin-2 from uroporphyrinogen III: step 1/1. It participates in cofactor biosynthesis; adenosylcobalamin biosynthesis; sirohydrochlorin from precorrin-2: step 1/1. The protein operates within porphyrin-containing compound metabolism; siroheme biosynthesis; precorrin-2 from uroporphyrinogen III: step 1/1. It functions in the pathway porphyrin-containing compound metabolism; siroheme biosynthesis; siroheme from sirohydrochlorin: step 1/1. Its pathway is porphyrin-containing compound metabolism; siroheme biosynthesis; sirohydrochlorin from precorrin-2: step 1/1. Functionally, multifunctional enzyme that catalyzes the SAM-dependent methylations of uroporphyrinogen III at position C-2 and C-7 to form precorrin-2 via precorrin-1. Then it catalyzes the NAD-dependent ring dehydrogenation of precorrin-2 to yield sirohydrochlorin. Finally, it catalyzes the ferrochelation of sirohydrochlorin to yield siroheme. The protein is Siroheme synthase of Salmonella heidelberg (strain SL476).